We begin with the raw amino-acid sequence, 139 residues long: Nucleoside diphosphate kinase (139 aa).

Lys11, Phe59, Arg87, Thr93, Arg104, and Asn114 together coordinate ATP. His117 serves as the catalytic Pros-phosphohistidine intermediate.

It belongs to the NDK family. As to quaternary structure, homotetramer. Mg(2+) is required as a cofactor.

Its subcellular location is the cytoplasm. The catalysed reaction is a 2'-deoxyribonucleoside 5'-diphosphate + ATP = a 2'-deoxyribonucleoside 5'-triphosphate + ADP. The enzyme catalyses a ribonucleoside 5'-diphosphate + ATP = a ribonucleoside 5'-triphosphate + ADP. Major role in the synthesis of nucleoside triphosphates other than ATP. The ATP gamma phosphate is transferred to the NDP beta phosphate via a ping-pong mechanism, using a phosphorylated active-site intermediate. This chain is Nucleoside diphosphate kinase, found in Wolbachia sp. subsp. Drosophila simulans (strain wRi).